The primary structure comprises 756 residues: Zinc finger and BTB domain-containing protein 49 (756 aa).

In terms of domain architecture, BTB spans 25–91; sequence CDCMLVVRGV…MYTSRLDLNQ (67 aa). Disordered regions lie at residues 176–197, 226–290, and 311–379; these read APSA…GGSC, PSQV…LSEP, and SQQS…PSQA. The segment covering 226–242 has biased composition (polar residues); it reads PSQVPATQQPLTRSAST. Basic and acidic residues-rich tracts occupy residues 319 to 341 and 348 to 365; these read SHPE…DAVE and AEEK…REEE. 7 consecutive C2H2-type zinc fingers follow at residues 386 to 408, 414 to 436, 442 to 464, 470 to 492, 498 to 520, 526 to 548, and 554 to 576; these read YACE…KRSH, FECN…LRRH, YICE…IIIH, HLCD…KKTH, FTCD…RVRH, YSCP…VRTH, and YSCE…KRMH.

The protein belongs to the krueppel C2H2-type zinc-finger protein family. In terms of assembly, interacts with EP300, KAT5/Tip60 and ZBTB17. The interaction with EP300 is direct and leads to synergistic induction of CDKN1A. On the CDKN1A promoter, forms a complex with ZBTB17; this interaction leads to additive CDKN1A transactivation. The interaction with ZBTB17 may block ZBTB17 repressor activity. In terms of tissue distribution, widely expressed, with highest levels in white adipose tissue and kidney, intermediate levels in brain, liver and heart, and lowest levels in spleen, brown adipose tissue and muscle.

It localises to the cytoplasm. It is found in the nucleus. Functionally, transcription factor. Inhibits cell proliferation by activating either CDKN1A/p21 transcription or RB1 transcription. The sequence is that of Zinc finger and BTB domain-containing protein 49 (Zbtb49) from Mus musculus (Mouse).